The following is a 317-amino-acid chain: Probable cell division protein WhiA (317 aa).

The segment at residues 276 to 310 (TLKELGEMVSGGKISKSGINHRLRKIDDIAEKLRA) is a DNA-binding region (H-T-H motif).

The protein belongs to the WhiA family.

Functionally, involved in cell division and chromosome segregation. The protein is Probable cell division protein WhiA of Bacillus thuringiensis (strain Al Hakam).